The sequence spans 671 residues: DNA ligase (671 aa).

NAD(+)-binding positions include D32–D36, S81–L82, and E113. The active-site N6-AMP-lysine intermediate is the K115. R136, E173, K290, and K314 together coordinate NAD(+). Zn(2+) is bound by residues C408, C411, C426, and C432. The BRCT domain maps to E593–S671.

This sequence belongs to the NAD-dependent DNA ligase family. LigA subfamily. Mg(2+) is required as a cofactor. Mn(2+) serves as cofactor.

The catalysed reaction is NAD(+) + (deoxyribonucleotide)n-3'-hydroxyl + 5'-phospho-(deoxyribonucleotide)m = (deoxyribonucleotide)n+m + AMP + beta-nicotinamide D-nucleotide.. Functionally, DNA ligase that catalyzes the formation of phosphodiester linkages between 5'-phosphoryl and 3'-hydroxyl groups in double-stranded DNA using NAD as a coenzyme and as the energy source for the reaction. It is essential for DNA replication and repair of damaged DNA. The chain is DNA ligase from Escherichia coli O6:K15:H31 (strain 536 / UPEC).